A 355-amino-acid chain; its full sequence is D-alanine--D-alanine ligase (355 aa).

In terms of domain architecture, ATP-grasp spans K143 to D350. L178–E233 contacts ATP. Mg(2+) contacts are provided by D303, E317, and N319.

It belongs to the D-alanine--D-alanine ligase family. Mg(2+) is required as a cofactor. The cofactor is Mn(2+).

The protein resides in the cytoplasm. The catalysed reaction is 2 D-alanine + ATP = D-alanyl-D-alanine + ADP + phosphate + H(+). It functions in the pathway cell wall biogenesis; peptidoglycan biosynthesis. In terms of biological role, cell wall formation. The chain is D-alanine--D-alanine ligase from Prochlorococcus marinus (strain MIT 9301).